The sequence spans 279 residues: NH(3)-dependent NAD(+) synthetase (279 aa).

46-53 (GISGGQDS) is a binding site for ATP. Residue Asp52 participates in Mg(2+) binding. Arg145 serves as a coordination point for deamido-NAD(+). Thr165 is an ATP binding site. Glu170 serves as a coordination point for Mg(2+). Positions 178 and 185 each coordinate deamido-NAD(+). Residues Lys194 and Thr216 each contribute to the ATP site. 265-266 (HK) lines the deamido-NAD(+) pocket.

The protein belongs to the NAD synthetase family. Homodimer.

It catalyses the reaction deamido-NAD(+) + NH4(+) + ATP = AMP + diphosphate + NAD(+) + H(+). The protein operates within cofactor biosynthesis; NAD(+) biosynthesis; NAD(+) from deamido-NAD(+) (ammonia route): step 1/1. Functionally, catalyzes the ATP-dependent amidation of deamido-NAD to form NAD. Uses ammonia as a nitrogen source. The protein is NH(3)-dependent NAD(+) synthetase of Rhodococcus opacus (strain B4).